The primary structure comprises 1240 residues: ATP-dependent helicase/nuclease subunit A (1240 aa).

The region spanning 12–485 is the UvrD-like helicase ATP-binding domain; sequence SQWTDDQWKA…IDLAKNFRSR (474 aa). 33-40 provides a ligand contact to ATP; it reads AAAGSGKT. The UvrD-like helicase C-terminal domain maps to 497-804; the sequence is KQIMGEEVGE…RIMTIHKSKG (308 aa).

This sequence belongs to the helicase family. AddA subfamily. As to quaternary structure, heterodimer of AddA and AddB/RexB. It depends on Mg(2+) as a cofactor.

It catalyses the reaction Couples ATP hydrolysis with the unwinding of duplex DNA by translocating in the 3'-5' direction.. The catalysed reaction is ATP + H2O = ADP + phosphate + H(+). In terms of biological role, the heterodimer acts as both an ATP-dependent DNA helicase and an ATP-dependent, dual-direction single-stranded exonuclease. Recognizes the chi site generating a DNA molecule suitable for the initiation of homologous recombination. The AddA nuclease domain is required for chi fragment generation; this subunit has the helicase and 3' -&gt; 5' nuclease activities. This is ATP-dependent helicase/nuclease subunit A from Bacillus cereus (strain AH820).